Here is a 379-residue protein sequence, read N- to C-terminus: Demethylspheroidene O-methyltransferase (379 aa).

Residues D235 and R279 each coordinate S-adenosyl-L-methionine.

The protein belongs to the class I-like SAM-binding methyltransferase superfamily. Cation-independent O-methyltransferase family.

It catalyses the reaction demethylspheroidene + S-adenosyl-L-methionine = spheroidene + S-adenosyl-L-homocysteine + H(+). The protein operates within carotenoid biosynthesis; spheroidene biosynthesis. In terms of biological role, methyltransferase that mediates the O-methylation of 1-hydroxy carotenoids. Converts hydroxyneurosporene to methoxyneurosporene or demethylspheroidene to spheroidene. Also able to produce spirilloxanthin. This is Demethylspheroidene O-methyltransferase (crtF) from Cereibacter sphaeroides (strain ATCC 17023 / DSM 158 / JCM 6121 / CCUG 31486 / LMG 2827 / NBRC 12203 / NCIMB 8253 / ATH 2.4.1.) (Rhodobacter sphaeroides).